The sequence spans 432 residues: MNFDVAIIGGGLAGLTCGIALQQRGKRCVIINNGQAAIDFASGSLDLLSRMPSTTYGENRAVENLKENITALRNELPAHPYSLLGAEKVLAKAQDFERLANELHLDLIGSTEKNHWRVTGLGSLRGAWLSPNSVPTVQGNELFPHKRIAVLGIEGYHDFQPQLLAANLVLNPQFEYCEVTSGFLNIPQLDELRKNAREFRSVNISQLLEHKLAFKDLVKEIIESSQGAEAVFLPACFGLENQEFMTALRDATKLALFELPTLPPSLLGMRQRIQLRHKFESLGGLMINGDSALNATFEGNKVRCINTRLLEDEEITADNFVLASGSFFSKGLISEFDKIYEPVFESDIIGVEGFNQKDRFTWTVHRFAHPQPYQSAGVAINAQCQVKKCGQFLTNLYAVGNVIGGFNALELGCGSGVAVVTALAVADEILAK.

Belongs to the anaerobic G-3-P dehydrogenase subunit B family. In terms of assembly, composed of a catalytic GlpA/B dimer and of membrane bound GlpC. The cofactor is FMN.

The enzyme catalyses a quinone + sn-glycerol 3-phosphate = dihydroxyacetone phosphate + a quinol. The protein operates within polyol metabolism; glycerol degradation via glycerol kinase pathway; glycerone phosphate from sn-glycerol 3-phosphate (anaerobic route): step 1/1. Conversion of glycerol 3-phosphate to dihydroxyacetone. Uses fumarate or nitrate as electron acceptor. The chain is Anaerobic glycerol-3-phosphate dehydrogenase subunit B from Haemophilus influenzae (strain PittEE).